We begin with the raw amino-acid sequence, 2027 residues long: Dedicator of cytokinesis protein 3 (2027 aa).

The 62-residue stretch at 6-67 (EEEKYGVVIC…PANYIHLKKA (62 aa)) folds into the SH3 domain. The C2 DOCK-type domain occupies 421–598 (RNDLYLTLEK…ESFFISTQLS (178 aa)). The DOCKER domain maps to 1225–1632 (KSEINKEEMY…LYHEFPGLDK (408 aa)). Position 1655 is a phosphoserine (Ser-1655). 4 disordered regions span residues 1672–1695 (GTGRHSSSSLSSHASSEAGNMMMM), 1731–1768 (SSSQASPSSSSLSSTHSAPSQMITSAPSSTRGSPSLPD), 1846–1925 (DTPP…DEGL), and 1971–2027 (PPKP…RGEQ). Low complexity-rich tracts occupy residues 1676-1695 (HSSSSLSSHASSEAGNMMMM) and 1731-1751 (SSSQASPSSSSLSSTHSAPSQ). Positions 1752–1763 (MITSAPSSTRGS) are enriched in polar residues. Residues 1877–1899 (GSNSTLSGSASSGVSSLSESNFG) show a composition bias toward low complexity. Positions 1967–1973 (PPALPPK) match the SH3-binding motif. 2 stretches are compositionally biased toward basic and acidic residues: residues 1981-1998 (ALEHDEGMLLREEAERPR) and 2011-2027 (VKEEQARLAWEHGRGEQ).

Belongs to the DOCK family. Interacts with presenilin proteins PSEN1 and PSEN2. Interacts with CRK. Expressed in brain, spinal cord, pituitary gland, testis. Not expressed in heart, liver, kidney, spleen and lung. In brain, it is highly expressed in the cerebral cortex and hippocampus, while it is absent in other tissues, except in spinal cord. In the cerebral cortex, it is found within the intermediate (III and IV) and deep (V and VI) layers, whereas it is weakly expressed in superficial layer I. It is also abundant in the piriform cortex. Within the hippocampus, it is expressed in the pyramidal neurons of the CA1, CA2, and CA3 regions and the dentate gyrus.

Its subcellular location is the cytoplasm. Its function is as follows. Potential guanine nucleotide exchange factor (GEF). GEF proteins activate some small GTPases by exchanging bound GDP for free GTP. Its interaction with presenilin proteins as well as its ability to stimulate Tau/MAPT phosphorylation suggest that it may be involved in Alzheimer disease. Ectopic expression in nerve cells decreases the secretion of amyloid-beta APBA1 protein and lowers the rate of cell-substratum adhesion, suggesting that it may affect the function of some small GTPase involved in the regulation of actin cytoskeleton or cell adhesion receptors. In Mus musculus (Mouse), this protein is Dedicator of cytokinesis protein 3 (Dock3).